A 143-amino-acid chain; its full sequence is Transcriptional regulator MraZ (143 aa).

SpoVT-AbrB domains are found at residues 5–47 and 76–119; these read EYQH…PQDE and ATEC…SKER.

The protein belongs to the MraZ family. As to quaternary structure, forms oligomers.

The protein localises to the cytoplasm. Its subcellular location is the nucleoid. The polypeptide is Transcriptional regulator MraZ (Brevibacillus brevis (strain 47 / JCM 6285 / NBRC 100599)).